The following is a 271-amino-acid chain: Large ribosomal subunit protein uL15c (271 aa).

2 disordered regions span residues 1–21 and 66–120; these read MASL…NNYP and SNVS…QKSR. The N-terminal 61 residues, 1–61, are a transit peptide targeting the chloroplast; the sequence is MASLLSLSST…KESTRLVVVA (61 aa). Low complexity predominate over residues 66–76; that stretch reads SNVSPSIGSGS. The segment covering 91–101 has biased composition (basic residues); that stretch reads SRKKGKRKGRG. Over residues 102–114 the composition is skewed to gly residues; that stretch reads HAAGQGGSCGFGM.

In terms of assembly, component of the chloroplast large ribosomal subunit (LSU). Mature 70S chloroplast ribosomes of higher plants consist of a small (30S) and a large (50S) subunit. The 30S small subunit contains 1 molecule of ribosomal RNA (16S rRNA) and 24 different proteins. The 50S large subunit contains 3 rRNA molecules (23S, 5S and 4.5S rRNA) and 33 different proteins.

The protein resides in the plastid. It is found in the chloroplast. Component of the chloroplast ribosome (chloro-ribosome), a dedicated translation machinery responsible for the synthesis of chloroplast genome-encoded proteins, including proteins of the transcription and translation machinery and components of the photosynthetic apparatus. The polypeptide is Large ribosomal subunit protein uL15c (RPL15) (Spinacia oleracea (Spinach)).